The sequence spans 143 residues: Transmembrane protein 207 (143 aa).

A signal peptide spans 1–29 (MSTSSPFRVASKIVTAGCLCLPLFQRVLS). The chain crosses the membrane as a helical span at residues 52 to 72 (IWFFLLIFLVVLLCGVVLFCL).

In terms of assembly, interacts with WWOX.

It localises to the membrane. The chain is Transmembrane protein 207 from Mus musculus (Mouse).